A 388-amino-acid polypeptide reads, in one-letter code: Succinate--CoA ligase [ADP-forming] subunit beta (388 aa).

In terms of domain architecture, ATP-grasp spans 9–244 (KEILRKYNVP…LDEEDANEIE (236 aa)). ATP-binding positions include Lys-46, 53 to 55 (GRG), Glu-99, Ala-102, and Glu-107. The Mg(2+) site is built by Asn-199 and Asp-213. Residues Asn-264 and 321–323 (GIM) each bind substrate.

Belongs to the succinate/malate CoA ligase beta subunit family. In terms of assembly, heterotetramer of two alpha and two beta subunits. Mg(2+) serves as cofactor.

The enzyme catalyses succinate + ATP + CoA = succinyl-CoA + ADP + phosphate. The catalysed reaction is GTP + succinate + CoA = succinyl-CoA + GDP + phosphate. The protein operates within carbohydrate metabolism; tricarboxylic acid cycle; succinate from succinyl-CoA (ligase route): step 1/1. Succinyl-CoA synthetase functions in the citric acid cycle (TCA), coupling the hydrolysis of succinyl-CoA to the synthesis of either ATP or GTP and thus represents the only step of substrate-level phosphorylation in the TCA. The beta subunit provides nucleotide specificity of the enzyme and binds the substrate succinate, while the binding sites for coenzyme A and phosphate are found in the alpha subunit. The protein is Succinate--CoA ligase [ADP-forming] subunit beta of Cupriavidus necator (strain ATCC 17699 / DSM 428 / KCTC 22496 / NCIMB 10442 / H16 / Stanier 337) (Ralstonia eutropha).